The chain runs to 361 residues: Putative F-box protein At3g18340 (361 aa).

The F-box domain occupies 1–46 (MASGKLPWELEEEILCRLPPGSLVRLRSVCKHWNDLYNDKWFIKKS).

This chain is Putative F-box protein At3g18340, found in Arabidopsis thaliana (Mouse-ear cress).